The sequence spans 649 residues: ATP-dependent zinc metalloprotease FtsH (649 aa).

Residues 1–18 (MQCSYPLARQLERSSALN) lie on the Cytoplasmic side of the membrane. The chain crosses the membrane as a helical span at residues 19–39 (NNLFQKAAIWLVIALVLFTVF). Over 40 to 115 (KQFDKPRAQD…VTGKADDEPN (76 aa)) the chain is Periplasmic. Residues 116-136 (VLVQALYYLGPTLLIIVFWFY) form a helical membrane-spanning segment. The Cytoplasmic portion of the chain corresponds to 137–649 (MMRQMQGGGK…PATARADETV (513 aa)). Residue 210 to 217 (GPPGTGKT) participates in ATP binding. Residue histidine 432 participates in Zn(2+) binding. The active site involves glutamate 433. The Zn(2+) site is built by histidine 436 and aspartate 508. Residues 606-649 (IMAGRPPRPPRGAQGPNSGGNTPPGGSPVAPTNAPATARADETV) are disordered. A compositionally biased stretch (low complexity) spans 616–626 (RGAQGPNSGGN).

In the central section; belongs to the AAA ATPase family. This sequence in the C-terminal section; belongs to the peptidase M41 family. Homohexamer. Zn(2+) serves as cofactor.

It is found in the cell inner membrane. Its function is as follows. Acts as a processive, ATP-dependent zinc metallopeptidase for both cytoplasmic and membrane proteins. Plays a role in the quality control of integral membrane proteins. The sequence is that of ATP-dependent zinc metalloprotease FtsH from Cupriavidus metallidurans (strain ATCC 43123 / DSM 2839 / NBRC 102507 / CH34) (Ralstonia metallidurans).